We begin with the raw amino-acid sequence, 686 residues long: Protein MxiA (686 aa).

A run of 6 helical transmembrane segments spans residues Leu28–Phe52, Phe105–Ile129, Ala197–Met216, Ile232–Val256, Ile274–Gly292, and Phe299–Tyr315.

It belongs to the FHIPEP (flagella/HR/invasion proteins export pore) family.

It localises to the cell inner membrane. Its function is as follows. Necessary for the secretion of IPA invasins. This chain is Protein MxiA (mxiA), found in Shigella flexneri.